The primary structure comprises 262 residues: 4-hydroxy-2-oxo-heptane-1,7-dioate aldolase (262 aa).

The active-site Proton acceptor is H45. Substrate is bound at residue Q147. E149 serves as a coordination point for a divalent metal cation. Positions 174 and 175 each coordinate substrate. D175 contacts a divalent metal cation.

The protein belongs to the HpcH/HpaI aldolase family. As to quaternary structure, homohexamer; trimer of dimers. A divalent metal cation serves as cofactor.

It catalyses the reaction 4-hydroxy-2-oxoheptanedioate = succinate semialdehyde + pyruvate. The catalysed reaction is D-glyceraldehyde + 3-hydroxypyruvate = (3R,4S,5R)-3,4,5,6-tetrahydroxy-2-oxohexanoate. It carries out the reaction D-glyceraldehyde + 3-hydroxypyruvate = 2-dehydro-D-gluconate. The enzyme catalyses D-glyceraldehyde + 3-hydroxypyruvate = 2-dehydro-D-galactonate. It catalyses the reaction D-glyceraldehyde + pyruvate = 2-dehydro-3-deoxy-L-galactonate. The catalysed reaction is 2-dehydro-3-deoxy-D-gluconate = D-glyceraldehyde + pyruvate. It functions in the pathway aromatic compound metabolism; 4-hydroxyphenylacetate degradation; pyruvate and succinate semialdehyde from 4-hydroxyphenylacetate: step 7/7. In terms of biological role, catalyzes the reversible retro-aldol cleavage of 4-hydroxy-2-ketoheptane-1,7-dioate (HKHD) to pyruvate and succinic semialdehyde. In vitro, can catalyze the aldolisation reaction between hydroxypyruvate (HPA) or pyruvate (PA) and D-glyceraldehyde (D-GA). The condensation of hydroxypyruvate and D-glyceraldehyde produces (3R,4S,5R)-3,4,5,6-tetrahydroxy-2-oxohexanoate as the major product, 2-dehydro-D-gluconate and 2-dehydro-D-galactonate. The condensation of pyruvate and D-glyceraldehyde produces 2-dehydro-3-deoxy-L-galactonate as the major product and 2-dehydro-3-deoxy-D-gluconate. The chain is 4-hydroxy-2-oxo-heptane-1,7-dioate aldolase from Escherichia coli (strain ATCC 8739 / DSM 1576 / NBRC 3972 / NCIMB 8545 / WDCM 00012 / Crooks).